We begin with the raw amino-acid sequence, 90 residues long: Small ribosomal subunit protein uS15 (90 aa).

The protein belongs to the universal ribosomal protein uS15 family. As to quaternary structure, part of the 30S ribosomal subunit. Forms a bridge to the 50S subunit in the 70S ribosome, contacting the 23S rRNA.

In terms of biological role, one of the primary rRNA binding proteins, it binds directly to 16S rRNA where it helps nucleate assembly of the platform of the 30S subunit by binding and bridging several RNA helices of the 16S rRNA. Functionally, forms an intersubunit bridge (bridge B4) with the 23S rRNA of the 50S subunit in the ribosome. This Helicobacter pylori (strain J99 / ATCC 700824) (Campylobacter pylori J99) protein is Small ribosomal subunit protein uS15.